The following is a 121-amino-acid chain: MARIAGVDLPNKHVSVALTYIYGISRSSARTICEKARISSACLINDLSQDELAVVRAIIDREYKVEGRLRTEVALNIKRLMDIGCYRGLRHRKGLPVRGQRTRTNARTRKGKRKTVAGKKK.

A disordered region spans residues 94–121 (GLPVRGQRTRTNARTRKGKRKTVAGKKK).

This sequence belongs to the universal ribosomal protein uS13 family. Part of the 30S ribosomal subunit. Forms a loose heterodimer with protein S19. Forms two bridges to the 50S subunit in the 70S ribosome.

Located at the top of the head of the 30S subunit, it contacts several helices of the 16S rRNA. In the 70S ribosome it contacts the 23S rRNA (bridge B1a) and protein L5 of the 50S subunit (bridge B1b), connecting the 2 subunits; these bridges are implicated in subunit movement. Contacts the tRNAs in the A and P-sites. In Treponema pallidum (strain Nichols), this protein is Small ribosomal subunit protein uS13.